The following is a 253-amino-acid chain: Hydroxypyruvate/pyruvate aldolase (253 aa).

The active-site Proton acceptor is H48. A divalent metal cation is bound by residues E151 and D177.

It belongs to the HpcH/HpaI aldolase family. It depends on a divalent metal cation as a cofactor.

It catalyses the reaction D-glyceraldehyde + pyruvate = 2-dehydro-3-deoxy-L-galactonate. In terms of biological role, aldolase which can catalyze in vitro the aldolisation reaction between hydroxypyruvate (HPA) or pyruvate (PA) and D-glyceraldehyde (D-GA). The condensation of pyruvate and D-glyceraldehyde produces 2-dehydro-3-deoxy-L-galactonate. Has weak activity with hydroxypyruvate and D-glyceraldehyde. The polypeptide is Hydroxypyruvate/pyruvate aldolase (Sagittula stellata (strain ATCC 700073 / DSM 11524 / E-37)).